Consider the following 144-residue polypeptide: Large ribosomal subunit protein uL15 (144 aa).

A disordered region spans residues 1–56; that stretch reads MELNNLKPAAGAKHAKRRVGRGIGSGLGKTAGRGHKGQKSRSGGFHKVGFEGGQMP. A compositionally biased stretch (gly residues) spans 21-31; sequence RGIGSGLGKTA.

Belongs to the universal ribosomal protein uL15 family. As to quaternary structure, part of the 50S ribosomal subunit.

Binds to the 23S rRNA. This is Large ribosomal subunit protein uL15 from Burkholderia cenocepacia (strain HI2424).